Here is a 777-residue protein sequence, read N- to C-terminus: MIISRQLPSFCLAALFLSFSGGAHALAQPEQTRAEIRRTSFGVPHIRADDERGLGYGIGYAYAQDNLCLMANEVLTVNAQRSQYFGAEGQTLEQRDNLSSDLFFSWLNTPQAVAAFWQAQTPAMRERMQGYVEGYNRQLAERQVQGLPEQCRGDWVRPLATSDLVKLTRRLLVEGGAGQFAEALAGATPPGATAQAGLPAEHWQLAAARQQRFALDRGSNAVAIGSERSFNGRGLLLANPHFPWVGGMRFYQMHLTIPGQLDVMGAALPGLPLINIGFNQHLAWTHTVDASKHFTLYRLQLDPKDPTRYLLDGRSLPLERQTLTVQSKGPDGQLQPRTRTLYSSVFGPIVQWPGELDWDHQYAYSLRDANLDNSRVLAQWYAMNQASSVAGLQDSVHQLQGIPWVNTLAVDDQGRALYMNQSVVPNVTQAKLAQCSDPRAGTRVIVLDGSRSACAWDIDPAAAQPGIFAASQLPQLARNDYLQHSNDSAWMVNPAAPLQGFSPVISEQDVPLKMRARFALDRLSRMHKAQVSDLQHLVTDDQVYLAGQVMPDLLQFCEQDLGADAQRLGPVCASLKAWDRSAGLQAGLGFVHFQGIMQPLLQDPSVWRVAFDPKDPQHTPRGLAIGRPAVARALRESMLASAQQVAEAGLGSDVRWGDIQQVSQGGQPTPVPGGPESLGVYNAIQSVPAADGKREVVSGTSYLNVVSFDEQGPRALGLLAFSLSSDPASAHFRDQTAAFARNQWSVLPFTEAQIRADGQYQLQVIEEPRKGAVLARQ.

Positions 1 to 25 are cleaved as a signal peptide; the sequence is MIISRQLPSFCLAALFLSFSGGAHA. A propeptide spans 196–218 (spacer peptide); it reads AGLPAEHWQLAAARQQRFALDRG. Ser219 (nucleophile) is an active-site residue.

The protein belongs to the peptidase S45 family. As to quaternary structure, heterodimer of an alpha subunit and a beta subunit processed from the same precursor.

It is found in the periplasm. It carries out the reaction an N-acyl-L-homoserine lactone + H2O = L-homoserine lactone + a carboxylate. In terms of biological role, catalyzes the deacylation of acyl-homoserine lactone (AHL or acyl-HSL), releasing homoserine lactone (HSL) and the corresponding fatty acid. Possesses a specificity for the degradation of long-chain acyl-HSLs (side chains of 11 to 14 carbons in length). The polypeptide is Acyl-homoserine lactone acylase PvdQ (pvdQ) (Pseudomonas fluorescens (strain ATCC BAA-477 / NRRL B-23932 / Pf-5)).